A 436-amino-acid polypeptide reads, in one-letter code: 3-ketoacyl-CoA thiolase (436 aa).

Cys-99 acts as the Acyl-thioester intermediate in catalysis. Residues His-392 and Cys-422 each act as proton acceptor in the active site.

The protein belongs to the thiolase-like superfamily. Thiolase family. Heterotetramer of two alpha chains (FadJ) and two beta chains (FadI).

It localises to the cytoplasm. It catalyses the reaction an acyl-CoA + acetyl-CoA = a 3-oxoacyl-CoA + CoA. It participates in lipid metabolism; fatty acid beta-oxidation. In terms of biological role, catalyzes the final step of fatty acid oxidation in which acetyl-CoA is released and the CoA ester of a fatty acid two carbons shorter is formed. The polypeptide is 3-ketoacyl-CoA thiolase (Shewanella baltica (strain OS185)).